The primary structure comprises 323 residues: Mortality factor 4-like protein 1 (323 aa).

Positions 12–62 (QEGERVLCFHGPLLYEAKCVKVAIKDKQVKYFIHYSGWNKNWDEWVPESRV) constitute a Tudor-knot domain. A disordered region spans residues 77-143 (QKANQEQYAE…RKKRARVDPT (67 aa)). The tract at residues 94-227 (PGKKTSGLQQ…VAGIKEYFNV (134 aa)) is sufficient for interaction with SIN3A. The residue at position 104 (Lys104) is an N6-acetyllysine. Residues 125–191 (STSETPQPPR…FYLPAKKNVD (67 aa)) form an interaction with RB1-1 region. Positions 149–303 (TFMNRVEVKV…FLKYLAKNSA (155 aa)) are sufficient for interaction with PHF12. Residues 152 to 323 (NRVEVKVKIP…APPEYHRKAV (172 aa)) enclose the MRG domain. The segment at 284–305 (LALLLNYLHDFLKYLAKNSATL) is interaction with RB1-2.

In terms of assembly, component of the NuA4 histone acetyltransferase complex which contains the catalytic subunit KAT5/TIP60 and the subunits EP400, TRRAP/PAF400, BRD8/SMAP, EPC1, DMAP1/DNMAP1, RUVBL1/TIP49, RUVBL2, ING3, actin, ACTL6A/BAF53A, MORF4L1/MRG15, MORF4L2/MRGX, MRGBP, YEATS4/GAS41, VPS72/YL1 and MEAF6. The NuA4 complex interacts with MYC and the adenovirus E1A protein. MORF4L1 may also participate in the formation of NuA4 related complexes which lack the KAT5/TIP60 catalytic subunit, but which include the SWI/SNF related protein SRCAP. Component of the mSin3A histone deacetylase complex, which includes SIN3A, HDAC2, ARID4B, MORF4L1, RBBP4/RbAp48, and RBBP7/RbAp46. May also interact with PHF12 and one or more as yet undefined members of the TLE (transducin-like enhancer of split) family of transcriptional repressors. Component of the SIN3B complex, which includes SIN3B, HDAC2 or HDAC1, PHF12 and MORF4L1. Interacts with RB1 and KAT8. Interacts with the N-terminus of MRFAP1. Found in a complex composed of MORF4L1, MRFAP1 and RB1. Interacts with the entire BRCA complex, which contains BRCA1, PALB2, BRCA2 and RAD51. Interacts with PALB2. Forms a complex with MSL1 and NUPR1.

Its subcellular location is the nucleus. Its function is as follows. Component of the NuA4 histone acetyltransferase (HAT) complex which is involved in transcriptional activation of select genes principally by acetylation of nucleosomal histones H4 and H2A. This modification may both alter nucleosome - DNA interactions and promote interaction of the modified histones with other proteins which positively regulate transcription. This complex may be required for the activation of transcriptional programs associated with oncogene and proto-oncogene mediated growth induction, tumor suppressor mediated growth arrest and replicative senescence, apoptosis, and DNA repair. The NuA4 complex ATPase and helicase activities seem to be, at least in part, contributed by the association of RUVBL1 and RUVBL2 with EP400. NuA4 may also play a direct role in DNA repair when directly recruited to sites of DNA damage. As part of the SIN3B complex represses transcription and counteracts the histone acetyltransferase activity of EP300 through the recognition H3K27ac marks by PHF12 and the activity of the histone deacetylase HDAC2. SIN3B complex is recruited downstream of the constitutively active genes transcriptional start sites through interaction with histones and mitigates histone acetylation and RNA polymerase II progression within transcribed regions contributing to the regulation of transcription. Required for homologous recombination repair (HRR) and resistance to mitomycin C (MMC). Involved in the localization of PALB2, BRCA2 and RAD51, but not BRCA1, to DNA-damage foci. The protein is Mortality factor 4-like protein 1 (Morf4l1) of Rattus norvegicus (Rat).